The primary structure comprises 114 residues: Large ribosomal subunit protein uL24 (114 aa).

Belongs to the universal ribosomal protein uL24 family. Part of the 50S ribosomal subunit.

Functionally, one of two assembly initiator proteins, it binds directly to the 5'-end of the 23S rRNA, where it nucleates assembly of the 50S subunit. In terms of biological role, one of the proteins that surrounds the polypeptide exit tunnel on the outside of the subunit. The sequence is that of Large ribosomal subunit protein uL24 from Acidothermus cellulolyticus (strain ATCC 43068 / DSM 8971 / 11B).